Here is a 542-residue protein sequence, read N- to C-terminus: 1-aminocyclopropane-1-carboxylate synthase 6 (542 aa).

The interval 1-28 (MRRSGNGGAAKKKKKRSASAASERRPRA) is disordered. Lys-379 carries the post-translational modification N6-(pyridoxal phosphate)lysine.

The protein belongs to the class-I pyridoxal-phosphate-dependent aminotransferase family. Pyridoxal 5'-phosphate is required as a cofactor. As to expression, expressed in leaves.

The protein resides in the plastid. It localises to the amyloplast membrane. It carries out the reaction S-adenosyl-L-methionine = 1-aminocyclopropane-1-carboxylate + S-methyl-5'-thioadenosine + H(+). It functions in the pathway alkene biosynthesis; ethylene biosynthesis via S-adenosyl-L-methionine; ethylene from S-adenosyl-L-methionine: step 1/2. Its function is as follows. Catalyzes the formation of 1-aminocyclopropane-1-carboxylate, a direct precursor of ethylene in higher plants. Required for the regulation of starch grain size in endosperm. The chain is 1-aminocyclopropane-1-carboxylate synthase 6 from Oryza sativa subsp. japonica (Rice).